Consider the following 917-residue polypeptide: Translation initiation factor IF-2 (917 aa).

The segment at 1 to 312 (MEEQKSIKET…KGGREENENT (312 aa)) is disordered. The span at 20-30 (TKKKLVIKKKA) shows a compositional bias: basic residues. The segment covering 41-59 (PGAQGQTTATEAKQSSPAS) has biased composition (polar residues). 2 stretches are compositionally biased toward basic and acidic residues: residues 60–76 (SDKKKDLNELIREEAKR) and 95–118 (RPDRKPEPLPQPDREKAPMDRKPE). Gly residues-rich tracts occupy residues 132–141 (SGGGQGGGNQ), 167–256 (QTGG…GYQG), and 281–293 (APGGLPGAGGPGG). Residues 297–312 (RVFDKEKGGREENENT) show a composition bias toward basic and acidic residues. The 174-residue stretch at 414-587 (TRPPVVTIMG…ELLDHKANPK (174 aa)) folds into the tr-type G domain. The G1 stretch occupies residues 423–430 (GHVDHGKT). 423–430 (GHVDHGKT) contributes to the GTP binding site. The segment at 448-452 (GITQH) is G2. Positions 469–472 (DTPG) are G3. GTP contacts are provided by residues 469-473 (DTPGH) and 523-526 (NKID). The tract at residues 523–526 (NKID) is G4. The interval 559 to 561 (SAK) is G5.

Belongs to the TRAFAC class translation factor GTPase superfamily. Classic translation factor GTPase family. IF-2 subfamily.

It localises to the cytoplasm. Its function is as follows. One of the essential components for the initiation of protein synthesis. Protects formylmethionyl-tRNA from spontaneous hydrolysis and promotes its binding to the 30S ribosomal subunits. Also involved in the hydrolysis of GTP during the formation of the 70S ribosomal complex. The sequence is that of Translation initiation factor IF-2 from Leptospira biflexa serovar Patoc (strain Patoc 1 / ATCC 23582 / Paris).